Reading from the N-terminus, the 155-residue chain is Ribonuclease H (155 aa).

The RNase H type-1 domain occupies 4–145 (ETKVIEIYTD…ADALARKAIT (142 aa)). Mg(2+) is bound by residues D13, E51, D73, and D137.

The protein belongs to the RNase H family. Monomer. The cofactor is Mg(2+).

It is found in the cytoplasm. The catalysed reaction is Endonucleolytic cleavage to 5'-phosphomonoester.. Functionally, endonuclease that specifically degrades the RNA of RNA-DNA hybrids. The polypeptide is Ribonuclease H (Bartonella bacilliformis (strain ATCC 35685 / KC583 / Herrer 020/F12,63)).